We begin with the raw amino-acid sequence, 23 residues long: Protein DCL, chloroplastic (23 aa).

It localises to the plastid. Its subcellular location is the chloroplast. Its function is as follows. Has a function in the early stage of chloroplast development and palisade cell morphogenesis. The protein is Protein DCL, chloroplastic of Pseudotsuga menziesii (Douglas-fir).